Here is a 478-residue protein sequence, read N- to C-terminus: Chromosomal replication initiator protein DnaA (478 aa).

A domain I, interacts with DnaA modulators region spans residues 1–95; that stretch reads MNKTLNPQEV…DVLEKEITEE (95 aa). Residues 96-141 form a domain II region; the sequence is INDLVQSMEEEDFALIDHTKPVIPNFFDQNTRVNFGGGPNNHHPTT. A domain III, AAA+ region region spans residues 142 to 358; it reads GVNPRFTFDN…GALLRIFALA (217 aa). Residues G186, G188, K189, and T190 each contribute to the ATP site. A domain IV, binds dsDNA region spans residues 359–478; the sequence is SFNKEEINMT…YKLTQFILRR (120 aa).

The protein belongs to the DnaA family. In terms of assembly, oligomerizes as a right-handed, spiral filament on DNA at oriC.

It is found in the cytoplasm. Plays an essential role in the initiation and regulation of chromosomal replication. ATP-DnaA binds to the origin of replication (oriC) to initiate formation of the DNA replication initiation complex once per cell cycle. Binds the DnaA box (a 9 base pair repeat at the origin) and separates the double-stranded (ds)DNA. Forms a right-handed helical filament on oriC DNA; dsDNA binds to the exterior of the filament while single-stranded (ss)DNA is stabiized in the filament's interior. The ATP-DnaA-oriC complex binds and stabilizes one strand of the AT-rich DNA unwinding element (DUE), permitting loading of DNA polymerase. After initiation quickly degrades to an ADP-DnaA complex that is not apt for DNA replication. Binds acidic phospholipids. In Tropheryma whipplei (strain TW08/27) (Whipple's bacillus), this protein is Chromosomal replication initiator protein DnaA.